The following is a 2537-amino-acid chain: Centrosomal protein of 192 kDa (2537 aa).

Disordered regions lie at residues 69-138 (FSVP…ATES) and 288-308 (HSSE…LPGT). Positions 70–81 (SVPSGSSPGSQS) are enriched in low complexity. Positions 106 to 122 (VESQRLSNALSKQSALQ) are enriched in polar residues. Basic and acidic residues predominate over residues 288 to 298 (HSSETTHKESE). Serine 812 carries the post-translational modification Phosphoserine. Disordered stretches follow at residues 950–1021 (VTFE…QQQP), 1043–1064 (VSEP…DRKS), 1101–1158 (KGTL…WTSN), and 1182–1234 (ATSH…STVH). Residues 960-970 (PKNSDLKNTSP) are compositionally biased toward polar residues. The span at 984-1005 (FRPSTSPLSHSSPSEISGTSSS) shows a compositional bias: low complexity. Composition is skewed to polar residues over residues 1046–1055 (PESSYPTTAT) and 1103–1112 (TLSSIIQNNS). Residues 1128–1141 (EYVKPDFRWSKDPS) are compositionally biased toward basic and acidic residues. Residues 1142–1158 (SKSGNLLETSEVGWTSN) are compositionally biased toward polar residues. A compositionally biased stretch (basic and acidic residues) spans 1195-1207 (EDQRISPKDKSTA). The span at 1213-1234 (GQVSHQTTSENQCTPIPSSTVH) shows a compositional bias: polar residues. Phosphoserine occurs at positions 1755, 2098, and 2110. Proline 2313 is subject to Hydroxyproline.

In terms of assembly, interacts with SHBG. Interacts with PLK4; this interaction mediates the formation of a ternary complex composed by PLK4, TENT5C and CEP192. Interacts with CCDC66. Post-translationally, hydroxylation by PHD1/EGLN2 at Pro-2313 promotes ubiquitination. In terms of processing, ubiquitinated by a SCF(SKP2) complex following proline hydroxylation. Ubiquitinated in a FBXL13-dependent manner, leading to proteasomal degradation.

It is found in the cytoplasm. The protein resides in the cytoskeleton. Its subcellular location is the microtubule organizing center. It localises to the centrosome. The protein localises to the centriole. Required for mitotic centrosome maturation and bipolar spindle assembly. Appears to be a major regulator of pericentriolar material (PCM) recruitment, centrosome maturation, and centriole duplication. Centrosome-specific activating scaffold for AURKA and PLK1. The sequence is that of Centrosomal protein of 192 kDa from Homo sapiens (Human).